A 146-amino-acid chain; its full sequence is Deoxyuridine 5'-triphosphate nucleotidohydrolase (146 aa).

Residues Arg-65–Gly-67, Asn-78, and Thr-82–Asp-84 each bind substrate.

The protein belongs to the dUTPase family. Mg(2+) serves as cofactor.

It carries out the reaction dUTP + H2O = dUMP + diphosphate + H(+). Its pathway is pyrimidine metabolism; dUMP biosynthesis; dUMP from dCTP (dUTP route): step 2/2. This enzyme is involved in nucleotide metabolism: it produces dUMP, the immediate precursor of thymidine nucleotides and it decreases the intracellular concentration of dUTP so that uracil cannot be incorporated into DNA. The chain is Deoxyuridine 5'-triphosphate nucleotidohydrolase from Treponema pallidum subsp. pallidum (strain SS14).